Here is a 727-residue protein sequence, read N- to C-terminus: Polyphosphate kinase (727 aa).

Position 82 (Asn-82) interacts with ATP. Residues Arg-412 and Arg-442 each contribute to the Mg(2+) site. His-472 acts as the Phosphohistidine intermediate in catalysis. ATP-binding residues include Tyr-505, Arg-601, and His-629.

It belongs to the polyphosphate kinase 1 (PPK1) family. The cofactor is Mg(2+). In terms of processing, an intermediate of this reaction is the autophosphorylated ppk in which a phosphate is covalently linked to a histidine residue through a N-P bond.

The enzyme catalyses [phosphate](n) + ATP = [phosphate](n+1) + ADP. Catalyzes the reversible transfer of the terminal phosphate of ATP to form a long-chain polyphosphate (polyP). This Pseudomonas putida (strain ATCC 47054 / DSM 6125 / CFBP 8728 / NCIMB 11950 / KT2440) protein is Polyphosphate kinase.